Reading from the N-terminus, the 389-residue chain is Succinate--CoA ligase [ADP-forming] subunit beta (389 aa).

The ATP-grasp domain occupies 9–244 (KELLRQFNVP…IDEEDAAEIE (236 aa)). ATP-binding positions include Lys46, 53 to 55 (GRG), Glu99, Ala102, and Glu107. Mg(2+) contacts are provided by Asn199 and Asp213. Substrate contacts are provided by residues Asn264 and 321–323 (GIM).

The protein belongs to the succinate/malate CoA ligase beta subunit family. In terms of assembly, heterotetramer of two alpha and two beta subunits. Requires Mg(2+) as cofactor.

It catalyses the reaction succinate + ATP + CoA = succinyl-CoA + ADP + phosphate. The enzyme catalyses GTP + succinate + CoA = succinyl-CoA + GDP + phosphate. The protein operates within carbohydrate metabolism; tricarboxylic acid cycle; succinate from succinyl-CoA (ligase route): step 1/1. In terms of biological role, succinyl-CoA synthetase functions in the citric acid cycle (TCA), coupling the hydrolysis of succinyl-CoA to the synthesis of either ATP or GTP and thus represents the only step of substrate-level phosphorylation in the TCA. The beta subunit provides nucleotide specificity of the enzyme and binds the substrate succinate, while the binding sites for coenzyme A and phosphate are found in the alpha subunit. The sequence is that of Succinate--CoA ligase [ADP-forming] subunit beta from Polynucleobacter asymbioticus (strain DSM 18221 / CIP 109841 / QLW-P1DMWA-1) (Polynucleobacter necessarius subsp. asymbioticus).